The sequence spans 134 residues: Ribonuclease P protein component 2 (134 aa).

The protein belongs to the eukaryotic/archaeal RNase P protein component 2 family. As to quaternary structure, consists of a catalytic RNA component and at least 4-5 protein subunits. Forms a subcomplex with Rnp3 which stimulates the catalytic RNA.

It is found in the cytoplasm. It carries out the reaction Endonucleolytic cleavage of RNA, removing 5'-extranucleotides from tRNA precursor.. Functionally, part of ribonuclease P, a protein complex that generates mature tRNA molecules by cleaving their 5'-ends. This is Ribonuclease P protein component 2 from Methanocaldococcus jannaschii (strain ATCC 43067 / DSM 2661 / JAL-1 / JCM 10045 / NBRC 100440) (Methanococcus jannaschii).